A 207-amino-acid polypeptide reads, in one-letter code: GTP cyclohydrolase-2 (207 aa).

R49–E53 is a binding site for GTP. Zn(2+) is bound by residues C54, C65, and C67. Residues Q70, E92–R94, and T114 each bind GTP. D126 serves as the catalytic Proton acceptor. R128 (nucleophile) is an active-site residue. Residues T149 and K154 each contribute to the GTP site.

Belongs to the GTP cyclohydrolase II family. Requires Zn(2+) as cofactor.

The catalysed reaction is GTP + 4 H2O = 2,5-diamino-6-hydroxy-4-(5-phosphoribosylamino)-pyrimidine + formate + 2 phosphate + 3 H(+). It functions in the pathway cofactor biosynthesis; riboflavin biosynthesis; 5-amino-6-(D-ribitylamino)uracil from GTP: step 1/4. Its function is as follows. Catalyzes the conversion of GTP to 2,5-diamino-6-ribosylamino-4(3H)-pyrimidinone 5'-phosphate (DARP), formate and pyrophosphate. This Hahella chejuensis (strain KCTC 2396) protein is GTP cyclohydrolase-2.